A 91-amino-acid chain; its full sequence is MFETITPLFPGLPGGPELLVVLLIVVLLFGANKIPKLARSSGQAIGEFQRGREEIEDELQDMTGDDDEDDATSESSADSVSTDSVSTESSN.

A helical transmembrane segment spans residues 9-29 (FPGLPGGPELLVVLLIVVLLF). The tract at residues 48-91 (FQRGREEIEDELQDMTGDDDEDDATSESSADSVSTDSVSTESSN) is disordered. Acidic residues predominate over residues 54 to 72 (EIEDELQDMTGDDDEDDAT). Residues 73-91 (SESSADSVSTDSVSTESSN) are compositionally biased toward low complexity.

This sequence belongs to the TatA/E family. Forms a complex with TatC. Cytoplasmic and membrane-bound TatA form high-molecular-weight complexes.

Its subcellular location is the cell membrane. It is found in the cytoplasm. Functionally, part of the twin-arginine translocation (Tat) system that transports large folded proteins containing a characteristic twin-arginine motif in their signal peptide across membranes. TatA could form the protein-conducting channel of the Tat system. The sequence is that of Sec-independent protein translocase protein TatAt from Haloferax volcanii (strain ATCC 29605 / DSM 3757 / JCM 8879 / NBRC 14742 / NCIMB 2012 / VKM B-1768 / DS2) (Halobacterium volcanii).